Consider the following 299-residue polypeptide: J domain-containing protein CG6693 (299 aa).

Residues 15–82 (DVYKLMELAR…QKRALYDEQG (68 aa)) form the J domain. The residue at position 239 (Ser239) is a Phosphoserine. The interval 266–299 (FEKKKKKSKKPAAKQETKPKLNGVKAGRVEKGKN) is disordered. Over residues 268–277 (KKKKKSKKPA) the composition is skewed to basic residues.

In Drosophila melanogaster (Fruit fly), this protein is J domain-containing protein CG6693.